The primary structure comprises 272 residues: Type III pantothenate kinase (272 aa).

ATP is bound at residue 6–13 (NVNNTNTL). 113-116 (GADR) is a binding site for substrate. Residue D115 is the Proton acceptor of the active site. D135 contributes to the K(+) binding site. ATP is bound at residue T138. Residue T190 participates in substrate binding.

Belongs to the type III pantothenate kinase family. As to quaternary structure, homodimer. NH4(+) is required as a cofactor. The cofactor is K(+).

Its subcellular location is the cytoplasm. It catalyses the reaction (R)-pantothenate + ATP = (R)-4'-phosphopantothenate + ADP + H(+). The protein operates within cofactor biosynthesis; coenzyme A biosynthesis; CoA from (R)-pantothenate: step 1/5. Catalyzes the phosphorylation of pantothenate (Pan), the first step in CoA biosynthesis. The protein is Type III pantothenate kinase of Acidobacterium capsulatum (strain ATCC 51196 / DSM 11244 / BCRC 80197 / JCM 7670 / NBRC 15755 / NCIMB 13165 / 161).